The primary structure comprises 119 residues: NADH-quinone oxidoreductase subunit A (119 aa).

The next 3 helical transmembrane spans lie at 7-27 (YPVL…VSIG), 63-83 (LVAI…PWGV), and 88-108 (IGWP…LGFA).

The protein belongs to the complex I subunit 3 family. As to quaternary structure, NDH-1 is composed of 14 different subunits. Subunits NuoA, H, J, K, L, M, N constitute the membrane sector of the complex.

The protein resides in the cell inner membrane. It carries out the reaction a quinone + NADH + 5 H(+)(in) = a quinol + NAD(+) + 4 H(+)(out). Functionally, NDH-1 shuttles electrons from NADH, via FMN and iron-sulfur (Fe-S) centers, to quinones in the respiratory chain. The immediate electron acceptor for the enzyme in this species is believed to be ubiquinone. Couples the redox reaction to proton translocation (for every two electrons transferred, four hydrogen ions are translocated across the cytoplasmic membrane), and thus conserves the redox energy in a proton gradient. This Burkholderia mallei (strain NCTC 10247) protein is NADH-quinone oxidoreductase subunit A.